Consider the following 519-residue polypeptide: Importin subunit alpha-9 (519 aa).

Residues 1–29 form a disordered region; the sequence is MADDGSASNRRDPIKSSVGNVAGQRRRKQ. ARM repeat units follow at residues 116 to 156, 158 to 197, 200 to 239, 244 to 283, 286 to 326, 335 to 374, 377 to 416, and 429 to 468; these read FPPV…NIAA, KPEE…NVAG, EDLR…NLIK, KAAA…YLSA, DIAT…NFVA, ILIR…NIAA, IEHK…NLCV, and QEHL…LVLR.

It belongs to the importin alpha family. As to quaternary structure, forms a complex with importin subunit beta-1.

The protein localises to the nucleus envelope. Its function is as follows. Binds to conventional NLS motifs and mediates nuclear protein import across the nuclear envelope. Acts as a cellular receptor for the nuclear import of the virD2 protein of Agrobacterium, but is not essential for Agrobacterium-mediated root transformation. This Arabidopsis thaliana (Mouse-ear cress) protein is Importin subunit alpha-9.